The primary structure comprises 224 residues: Orotate phosphoribosyltransferase (224 aa).

5-phospho-alpha-D-ribose 1-diphosphate contacts are provided by residues Lys26, 73 to 74 (YK), Arg100, Lys101, Lys104, His106, and 127 to 135 (EDVTTAGTS). Residues Thr131 and Arg160 each coordinate orotate.

It belongs to the purine/pyrimidine phosphoribosyltransferase family. PyrE subfamily. Homodimer. Mg(2+) is required as a cofactor.

It catalyses the reaction orotidine 5'-phosphate + diphosphate = orotate + 5-phospho-alpha-D-ribose 1-diphosphate. Its pathway is pyrimidine metabolism; UMP biosynthesis via de novo pathway; UMP from orotate: step 1/2. Catalyzes the transfer of a ribosyl phosphate group from 5-phosphoribose 1-diphosphate to orotate, leading to the formation of orotidine monophosphate (OMP). The polypeptide is Orotate phosphoribosyltransferase (Clostridium beijerinckii (strain ATCC 51743 / NCIMB 8052) (Clostridium acetobutylicum)).